The chain runs to 451 residues: Cytochrome c biogenesis protein CcsB (451 aa).

The next 3 membrane-spanning stretches (helical) occupy residues L30 to I50, T89 to T109, and I175 to A195.

Belongs to the Ccs1/CcsB family. May interact with CcsA.

The protein localises to the cellular thylakoid membrane. Required during biogenesis of c-type cytochromes (cytochrome c6 and cytochrome f) at the step of heme attachment. This chain is Cytochrome c biogenesis protein CcsB, found in Crocosphaera subtropica (strain ATCC 51142 / BH68) (Cyanothece sp. (strain ATCC 51142)).